Reading from the N-terminus, the 220-residue chain is Putative NAD(P)H nitroreductase (220 aa).

155–160 lines the NAD(+) pocket; it reads GASALG.

Belongs to the nitroreductase family. It depends on FMN as a cofactor.

In Haemophilus influenzae (strain ATCC 51907 / DSM 11121 / KW20 / Rd), this protein is Putative NAD(P)H nitroreductase.